A 279-amino-acid polypeptide reads, in one-letter code: Shikimate dehydrogenase (NADP(+)) (279 aa).

Residues 19-21 and Thr66 contribute to the shikimate site; that span reads SRS. Lys70 functions as the Proton acceptor in the catalytic mechanism. Asn91 and Asp106 together coordinate shikimate. Residues 129 to 133, 152 to 157, and Ile218 contribute to the NADP(+) site; these read GAGGA and NRTLER. Shikimate is bound at residue Tyr220. NADP(+) is bound at residue Gly241.

The protein belongs to the shikimate dehydrogenase family. Homodimer.

It carries out the reaction shikimate + NADP(+) = 3-dehydroshikimate + NADPH + H(+). It functions in the pathway metabolic intermediate biosynthesis; chorismate biosynthesis; chorismate from D-erythrose 4-phosphate and phosphoenolpyruvate: step 4/7. In terms of biological role, involved in the biosynthesis of the chorismate, which leads to the biosynthesis of aromatic amino acids. Catalyzes the reversible NADPH linked reduction of 3-dehydroshikimate (DHSA) to yield shikimate (SA). In Gluconobacter oxydans (strain 621H) (Gluconobacter suboxydans), this protein is Shikimate dehydrogenase (NADP(+)).